Reading from the N-terminus, the 593-residue chain is Pyruvate kinase isozyme A, chloroplastic (593 aa).

The segment at 57–94 is disordered; it reads DEPQSSPVLVSENGSGGVLSSATQEYGRNAAPGTDSSS. Residue Arg-144 participates in substrate binding. Positions 146, 178, and 179 each coordinate K(+). 146 to 149 contacts ATP; that stretch reads NMCH. Glu-343 serves as a coordination point for Mg(2+). Residues Gly-366, Asp-367, and Ser-399 each contribute to the substrate site. Mg(2+) is bound at residue Asp-367.

Belongs to the pyruvate kinase family. Mg(2+) serves as cofactor. The cofactor is K(+). As to expression, highest levels in roots. Also found in stems, leaves and flowers.

It localises to the plastid. The protein resides in the chloroplast. It carries out the reaction pyruvate + ATP = phosphoenolpyruvate + ADP + H(+). Its pathway is carbohydrate degradation; glycolysis; pyruvate from D-glyceraldehyde 3-phosphate: step 5/5. This Nicotiana tabacum (Common tobacco) protein is Pyruvate kinase isozyme A, chloroplastic.